Reading from the N-terminus, the 394-residue chain is Xylose isomerase (394 aa).

Catalysis depends on residues H54 and D57. E180, E216, H219, D244, D254, D256, and D285 together coordinate Mg(2+). The disordered stretch occupies residues 370–394 (VRTPRPAGDGPPAGRARLTVAPRKR). Low complexity predominate over residues 373 to 386 (PRPAGDGPPAGRAR).

Belongs to the xylose isomerase family. As to quaternary structure, homotetramer. Mg(2+) serves as cofactor.

It localises to the cytoplasm. The enzyme catalyses alpha-D-xylose = alpha-D-xylulofuranose. In terms of biological role, involved in D-xylose catabolism. The chain is Xylose isomerase (xylA) from Streptomyces rochei (Streptomyces parvullus).